The primary structure comprises 194 residues: MKNIILASASERRQELLKRILEDFQIIVSDFDESSIPFKDNISSYVMNLAEGKARSVSKKIMDQDNNLVIGCDTLVAFNNKILGKPKDKKDAFEMLQALSGNEHEVYSGLAILDVKSNKIITDFVCTKVKFSKLTSLQIEKYVNTGDPMDKAGAYGIQGKAGVFVENINGCYYNVVGLPLNKLNSMLMEMGVNL.

Residue D73 is the Proton acceptor of the active site.

This sequence belongs to the Maf family. YhdE subfamily. A divalent metal cation serves as cofactor.

The protein localises to the cytoplasm. The enzyme catalyses dTTP + H2O = dTMP + diphosphate + H(+). It catalyses the reaction UTP + H2O = UMP + diphosphate + H(+). Its function is as follows. Nucleoside triphosphate pyrophosphatase that hydrolyzes dTTP and UTP. May have a dual role in cell division arrest and in preventing the incorporation of modified nucleotides into cellular nucleic acids. This Clostridium botulinum (strain Kyoto / Type A2) protein is dTTP/UTP pyrophosphatase.